The primary structure comprises 251 residues: Triosephosphate isomerase (251 aa).

Substrate is bound at residue 9-11 (NWK). The active-site Electrophile is the His95. Catalysis depends on Glu167, which acts as the Proton acceptor. Substrate is bound by residues Gly173, Ser213, and 234–235 (GG).

It belongs to the triosephosphate isomerase family. As to quaternary structure, homodimer.

Its subcellular location is the cytoplasm. It catalyses the reaction D-glyceraldehyde 3-phosphate = dihydroxyacetone phosphate. The protein operates within carbohydrate biosynthesis; gluconeogenesis. It functions in the pathway carbohydrate degradation; glycolysis; D-glyceraldehyde 3-phosphate from glycerone phosphate: step 1/1. Functionally, involved in the gluconeogenesis. Catalyzes stereospecifically the conversion of dihydroxyacetone phosphate (DHAP) to D-glyceraldehyde-3-phosphate (G3P). This is Triosephosphate isomerase from Geobacter metallireducens (strain ATCC 53774 / DSM 7210 / GS-15).